The following is a 261-amino-acid chain: 5'-nucleotidase SurE (261 aa).

Residues Asp8, Asp9, Ser43, and Asn96 each contribute to the a divalent metal cation site.

This sequence belongs to the SurE nucleotidase family. A divalent metal cation serves as cofactor.

The protein localises to the cytoplasm. The enzyme catalyses a ribonucleoside 5'-phosphate + H2O = a ribonucleoside + phosphate. Functionally, nucleotidase that shows phosphatase activity on nucleoside 5'-monophosphates. The polypeptide is 5'-nucleotidase SurE (Roseobacter denitrificans (strain ATCC 33942 / OCh 114) (Erythrobacter sp. (strain OCh 114))).